Reading from the N-terminus, the 84-residue chain is Large ribosomal subunit protein bL27 (84 aa).

Positions 1–21 (MAHKKGGGSTKNGRDSNPKYL) are disordered.

Belongs to the bacterial ribosomal protein bL27 family.

This Chlorobaculum parvum (strain DSM 263 / NCIMB 8327) (Chlorobium vibrioforme subsp. thiosulfatophilum) protein is Large ribosomal subunit protein bL27.